Consider the following 873-residue polypeptide: Polyribonucleotide nucleotidyltransferase (873 aa).

Mg(2+)-binding residues include Asp521 and Asp527. The 60-residue stretch at Pro587 to Ile646 folds into the KH domain. The S1 motif domain occupies Gly658–Pro730. A disordered region spans residues Leu727–Asp873. Over residues Arg742–His857 the composition is skewed to basic and acidic residues.

This sequence belongs to the polyribonucleotide nucleotidyltransferase family. Mg(2+) is required as a cofactor.

The protein resides in the cytoplasm. The enzyme catalyses RNA(n+1) + phosphate = RNA(n) + a ribonucleoside 5'-diphosphate. In terms of biological role, involved in mRNA degradation. Catalyzes the phosphorolysis of single-stranded polyribonucleotides processively in the 3'- to 5'-direction. This chain is Polyribonucleotide nucleotidyltransferase, found in Bifidobacterium animalis subsp. lactis (strain AD011).